Consider the following 283-residue polypeptide: NifU-like protein 4, mitochondrial (283 aa).

Residues 1–48 (MKGIARLVTSLSRIGGRKVVSGTSTVTSSSSSSLLLSRRSLFISATNL) constitute a mitochondrion transit peptide.

This sequence belongs to the NifU family. Predominantly expressed in roots.

The protein resides in the mitochondrion. Functionally, molecular scaffold for [Fe-S] cluster assembly of mitochondrial iron-sulfur proteins. This chain is NifU-like protein 4, mitochondrial (NIFU4), found in Arabidopsis thaliana (Mouse-ear cress).